Consider the following 817-residue polypeptide: DNA mismatch repair protein MutS (817 aa).

604–611 (GPNMSGKS) is a binding site for ATP.

It belongs to the DNA mismatch repair MutS family.

Its function is as follows. This protein is involved in the repair of mismatches in DNA. It is possible that it carries out the mismatch recognition step. This protein has a weak ATPase activity. The sequence is that of DNA mismatch repair protein MutS from Petrotoga mobilis (strain DSM 10674 / SJ95).